The chain runs to 757 residues: RNA-directed RNA polymerase catalytic subunit (757 aa).

The tract at residues 53 to 82 is disordered; the sequence is GRWTKNTETGAPQLNPIDGPLPKDNEPSGY. 2 short sequence motifs (nuclear localization signal) span residues 187 to 195 and 203 to 216; these read RKRRVRDNV and RTIG…NKRS. The segment at 249–256 is promoter-binding site; that stretch reads RGFVYFVE. Residues 286–483 form the RdRp catalytic domain; sequence VRKMMTNSQD…GINMSKKKSY (198 aa).

It belongs to the influenza viruses polymerase PB1 family. In terms of assembly, influenza RNA polymerase is composed of three subunits: PB1, PB2 and PA. Interacts (via N-terminus) with PA (via C-terminus). Interacts (via C-terminus) with PB2 (via N-terminus); this interaction is essential for transcription initiation. Interacts (via C-terminus) with human PKP2 (via N-terminus); the interaction competitively inhibits the interaction between the RNA polymerase subunits PB1 and PB2. Post-translationally, phosphorylated by host PRKCA.

It is found in the host nucleus. The protein localises to the host cytoplasm. It catalyses the reaction RNA(n) + a ribonucleoside 5'-triphosphate = RNA(n+1) + diphosphate. Functionally, RNA-dependent RNA polymerase which is responsible for replication and transcription of virus RNA segments. The transcription of viral mRNAs occurs by a unique mechanism called cap-snatching. 5' methylated caps of cellular mRNAs are cleaved after 10-13 nucleotides by PA. In turn, these short capped RNAs are used as primers by PB1 for transcription of viral mRNAs. During virus replication, PB1 initiates RNA synthesis and copy vRNA into complementary RNA (cRNA) which in turn serves as a template for the production of more vRNAs. This is RNA-directed RNA polymerase catalytic subunit from Aves (Human).